A 142-amino-acid chain; its full sequence is uncharacterized protein (142 aa).

The region spanning 1–120 (MADKFDANDE…TILKWEKNMD (120 aa)) is the N-acetyltransferase domain.

This sequence belongs to the acetyltransferase family.

This is an uncharacterized protein from Streptococcus pyogenes serotype M1.